The chain runs to 113 residues: MFVLFLIVCYFILIFNIIVPKIADKLRLEHEAFTKYRQIYGNKFRCIGDNLINYSFTPFGVKANYLVNKNTKMPAICNDIKNINSLIAVTCDDASKFIKHRNICERAYTELFL.

The chain crosses the membrane as a helical; Signal-anchor for type III membrane protein span at residues 1-23 (MFVLFLIVCYFILIFNIIVPKIA). At 24 to 113 (DKLRLEHEAF…CERAYTELFL (90 aa)) the chain is on the virion surface side.

Belongs to the chordopoxvirinae A21 family. As to quaternary structure, envelope protein part of a stable entry-fusion complex (EFC) which is at least composed of proteins A16, A21, A28, G3, G9, H2, J5, and L5. Formation of the viral membrane is necessary for the assembly of the complex. In terms of processing, contains two intramolecular disulfide bonds. They are created by the viral disulfide bond formation pathway, a poxvirus-specific pathway that operates on the cytoplasmic side of the MV membranes.

Its subcellular location is the virion membrane. Its function is as follows. Envelope protein part of the entry-fusion complex responsible for the virus membrane fusion with host cell membrane during virus entry. This is Virion membrane protein A21 homolog from Vertebrata (FPV).